Reading from the N-terminus, the 413-residue chain is MKGALGSPVAAAGAAMQESFGCVVANRFHQLLDDESDPFDILREAERRRQQQLQRKRRDEAAAAAGAGPRGGRSPAGASGHRAGAGGRRESQKERKSLPAPVAQRPDSPGGGLQAPGQKRTPRRGEQQGWNDSRGPEGMLERAERRSYREYRPYETERQADFTAEKFPDEKPGDRFDRDRPLRGRGGPRGGMRGRGRGGPGNRVFDAFDQRGKREFERYGGNDKIAVRTEDNMGGCGVRTWGSGKDTSDVEPTAPMEEPTVVEESQGTPEEESPAKVPELEVEEETQVQEMTLDEWKNLQEQTRPKPEFNIRKPESTVPSKAVVIHKSKYRDDMVKDDYEDDSHVFRKPANDITSQLEINFGNLPRPGRGARGGTRGGRGRIRRAENYGPRAEVVMQDVAPNPDDPEDFPALS.

Phosphoserine is present on residues serine 7 and serine 36. Residues 40–64 adopt a coiled-coil conformation; the sequence is DILREAERRRQQQLQRKRRDEAAAA. The tract at residues 42–206 is disordered; sequence LREAERRRQQ…RGGPGNRVFD (165 aa). The segment covering 62-82 has biased composition (low complexity); sequence AAAAGAGPRGGRSPAGASGHR. An Omega-N-methylarginine modification is found at arginine 70. Serine 74 carries the phosphoserine modification. The segment covering 87–97 has biased composition (basic and acidic residues); sequence GRRESQKERKS. Serine 108 bears the Phosphoserine mark. The span at 139–182 shows a compositional bias: basic and acidic residues; the sequence is MLERAERRSYREYRPYETERQADFTAEKFPDEKPGDRFDRDRPL. The segment covering 184–201 has biased composition (gly residues); sequence GRGGPRGGMRGRGRGGPG. Glycyl lysine isopeptide (Lys-Gly) (interchain with G-Cter in SUMO1); alternate cross-links involve residues lysine 213 and lysine 276. Residues lysine 213 and lysine 276 each participate in a glycyl lysine isopeptide (Lys-Gly) (interchain with G-Cter in SUMO2); alternate cross-link. The segment at 227-320 is disordered; sequence VRTEDNMGGC…IRKPESTVPS (94 aa). The segment covering 294–315 has biased composition (basic and acidic residues); it reads DEWKNLQEQTRPKPEFNIRKPE. Lysine 336 is covalently cross-linked (Glycyl lysine isopeptide (Lys-Gly) (interchain with G-Cter in SUMO1); alternate). Residue lysine 336 forms a Glycyl lysine isopeptide (Lys-Gly) (interchain with G-Cter in SUMO2); alternate linkage. Phosphothreonine; by PKC is present on residues threonine 354 and threonine 375. The interval 360 to 413 is disordered; sequence NFGNLPRPGRGARGGTRGGRGRIRRAENYGPRAEVVMQDVAPNPDDPEDFPALS. Positions 404-413 are enriched in acidic residues; sequence DDPEDFPALS.

Belongs to the SERBP1-HABP4 family. As to quaternary structure, associates with ribosomes; promoting ribosome stabilization. Interacts with EEF2/eEF2; promoting ribosome stabilization. Interacts with FMR1. Interacts with FXR1 and FXR2. Interacts with CHD3 (via C-terminus). Interacts (via C-terminus) with RACK1. Interacts with p53/TP53. Interacts (via N-terminus) with SRSF9; this interaction is direct. Interacts with SYNCRIP; this interaction is direct. Interacts with MEF2C (via N-terminus); this interaction decreases DNA-binding activity of MEF2C in myocardial cells in response to mechanical stress. Interacts with PRMT1 (via N-terminus). Interacts with SPIN1. Methylated. Methylation is decreased by phorbol 12-myristate 13-acetate (PMA)-activated PKC, in vitro. In terms of processing, phosphorylated by phorbol 12-myristate 13-acetate (PMA)-activated PKC isoforms at Thr-354 and Thr-375. In terms of tissue distribution, highly expressed in brain, heart, and kidney, and moderately expressed in skeletal muscle. Also expressed in a variety of tumor cell lines and in activated but not resting leukocytes.

Its subcellular location is the nucleus. It is found in the cytoplasm. It localises to the stress granule. The protein resides in the sarcoplasm. The protein localises to the nuclear body. Its subcellular location is the nucleolus. It is found in the nucleus speckle. It localises to the cajal body. The protein resides in the gem. Ribosome-binding protein that promotes ribosome hibernation, a process during which ribosomes are stabilized in an inactive state and preserved from proteasomal degradation. Acts via its association with EEF2/eEF2 factor at the A-site of the ribosome, promoting ribosome stabilization in an inactive state compatible with storage. Plays a key role in ribosome hibernation in the mature oocyte by promoting ribosome stabilization. Ribosomes, which are produced in large quantities during oogenesis, are stored and translationally repressed in the oocyte and early embryo. Also binds RNA, regulating transcription and pre-mRNA splicing. Binds (via C-terminus) to poly(U) RNA. Seems to play a role in PML-nuclear bodies formation. Negatively regulates DNA-binding activity of the transcription factor MEF2C in myocardial cells in response to mechanical stress. This Homo sapiens (Human) protein is Intracellular hyaluronan-binding protein 4.